The primary structure comprises 660 residues: uncharacterized protein (660 aa).

The tract at residues 1 to 660 (MGTPCQSARG…RNPGCPRTWR (660 aa)) is disordered. Residues 67–80 (RPGGGNRVGAGRGR) are compositionally biased toward gly residues. The span at 104 to 116 (SNPTGGCSDPQRS) shows a compositional bias: polar residues. 4 tandem repeats follow at residues 149 to 273 (SARN…GCPR), 274 to 398 (SARN…GCPR), 399 to 523 (SARN…GCPR), and 524 to 648 (SARN…GCPR). A 4 X 125 AA tandem repeats region spans residues 149–648 (SARNPGCPRT…THRRPPGCPR (500 aa)). 4 stretches are compositionally biased toward low complexity: residues 177–196 (RPSG…GTPA), 302–321 (RPSG…GTPA), 427–446 (RPSG…GTPA), and 552–571 (RPSG…GTPA).

This is an uncharacterized protein from Homo sapiens (Human).